A 144-amino-acid chain; its full sequence is Putative pre-16S rRNA nuclease (144 aa).

This sequence belongs to the YqgF nuclease family.

The protein localises to the cytoplasm. Could be a nuclease involved in processing of the 5'-end of pre-16S rRNA. This chain is Putative pre-16S rRNA nuclease, found in Pseudomonas paraeruginosa (strain DSM 24068 / PA7) (Pseudomonas aeruginosa (strain PA7)).